The primary structure comprises 324 residues: tRNA U34 carboxymethyltransferase (324 aa).

Carboxy-S-adenosyl-L-methionine is bound by residues Lys-92, Trp-106, Lys-111, Gly-131, Leu-181–Glu-182, Met-197, Tyr-201, and Arg-316.

It belongs to the class I-like SAM-binding methyltransferase superfamily. CmoB family. Homotetramer.

The catalysed reaction is carboxy-S-adenosyl-L-methionine + 5-hydroxyuridine(34) in tRNA = 5-carboxymethoxyuridine(34) in tRNA + S-adenosyl-L-homocysteine + H(+). Catalyzes carboxymethyl transfer from carboxy-S-adenosyl-L-methionine (Cx-SAM) to 5-hydroxyuridine (ho5U) to form 5-carboxymethoxyuridine (cmo5U) at position 34 in tRNAs. This Syntrophotalea carbinolica (strain DSM 2380 / NBRC 103641 / GraBd1) (Pelobacter carbinolicus) protein is tRNA U34 carboxymethyltransferase.